Here is a 214-residue protein sequence, read N- to C-terminus: Adenylate kinase (214 aa).

10 to 15 is a binding site for ATP; sequence GAGKGT. The segment at 30–59 is NMP; the sequence is STGDMLRAAVKAGSELGLKAKEIMDAGKLV. AMP-binding positions include T31, R36, 57 to 59, 85 to 88, and Q92; these read KLV and GFPR. Residues 122–159 are LID; that stretch reads GRRVHAASGRVYHVKFNPPKVEDKDDVTGEDLTIRKDD. ATP is bound by residues R123 and 132–133; that span reads VY. Residues R156 and R167 each contribute to the AMP site. An ATP-binding site is contributed by R200.

Belongs to the adenylate kinase family. As to quaternary structure, monomer.

It localises to the cytoplasm. The enzyme catalyses AMP + ATP = 2 ADP. It participates in purine metabolism; AMP biosynthesis via salvage pathway; AMP from ADP: step 1/1. Its function is as follows. Catalyzes the reversible transfer of the terminal phosphate group between ATP and AMP. Plays an important role in cellular energy homeostasis and in adenine nucleotide metabolism. This chain is Adenylate kinase, found in Yersinia enterocolitica serotype O:8 / biotype 1B (strain NCTC 13174 / 8081).